Reading from the N-terminus, the 268-residue chain is Exodeoxyribonuclease III (268 aa).

Position 34 (E34) interacts with Mg(2+). Y109 is an active-site residue. 3 residues coordinate Mg(2+): D151, N153, and D258. The active-site Proton donor/acceptor is D151.

It belongs to the DNA repair enzymes AP/ExoA family. Monomer. The cofactor is Mg(2+). It depends on Mn(2+) as a cofactor.

The enzyme catalyses Exonucleolytic cleavage in the 3'- to 5'-direction to yield nucleoside 5'-phosphates.. Functionally, major apurinic-apyrimidinic endonuclease of E.coli. It removes the damaged DNA at cytosines and guanines by cleaving on the 3'-side of the AP site by a beta-elimination reaction. It exhibits 3'-5'-exonuclease, 3'-phosphomonoesterase, 3'-repair diesterase and ribonuclease H activities. This Salmonella typhi protein is Exodeoxyribonuclease III (xthA).